We begin with the raw amino-acid sequence, 878 residues long: Protein argonaute 6 (878 aa).

Residues Met-1–Glu-17 are compositionally biased toward low complexity. The segment at Met-1–Asp-25 is disordered. Positions Pro-259–Ser-372 constitute a PAZ domain. A Piwi domain is found at Phe-541–Lys-851.

The protein belongs to the argonaute family. Ago subfamily. In terms of tissue distribution, expressed in roots, cotyledons and shoot meristematic region.

It localises to the nucleus. Its function is as follows. Involved in transcriptional gene silencing (TGS). Component of the RISC complex that associate with the small interfering RNA (siRNA) pathway involved in direct cytosine methylation at endogenous DNA repeats. Required for the accumulation of specific siRNAs derived from transgene and heterochromatin-related endogenous loci. Involved in RNA-directed DNA methylation (RdDM) at specific endogenous loci. Probably not required for the accumulation of siRNAs derived from transgene inverted repeats that induce post-transcriptional gene silencing (PTGS). Associates mainly with small RNAs of 24 nucleotide in length and preferentially recruits small RNAs with a 5' terminal adenosine. Targeted by turnip yellows virus (TuYV) protein P0 (via F-box-like domain) for probable proteasome degradation and thereby inactivating AGO6 function in RNA silencing. The polypeptide is Protein argonaute 6 (AGO6) (Arabidopsis thaliana (Mouse-ear cress)).